The following is a 406-amino-acid chain: 4-O-methyl-glucuronoyl methylesterase (406 aa).

Positions 1 to 17 are cleaved as a signal peptide; that stretch reads MAFRWLSFLLLALPVLA. Cys-31 and Cys-64 are disulfide-bonded. 4 N-linked (GlcNAc...) asparagine glycosylation sites follow: Asn-100, Asn-110, Asn-122, and Asn-178. The GXSYXG catalytic site motif motif lies at 215–220; the sequence is GCSRDG. 2 disulfide bridges follow: Cys-216–Cys-352 and Cys-248–Cys-324. The Nucleophile role is filled by Ser-217. Substrate contacts are provided by Lys-221, Gln-263, and Glu-271. N-linked (GlcNAc...) asparagine glycosylation is present at Asn-285. A substrate-binding site is contributed by Trp-315. N-linked (GlcNAc...) asparagine glycosylation occurs at Asn-348. His-351 acts as the Proton donor/acceptor in catalysis. N-linked (GlcNAc...) asparagine glycans are attached at residues Asn-376, Asn-387, and Asn-398.

It belongs to the carbohydrate esterase 15 (CE15) family.

It localises to the secreted. It catalyses the reaction a 4-O-methyl-alpha-D-glucuronosyl ester derivative + H2O = 4-O-methyl-alpha-D-glucuronate derivative + an alcohol + H(+). Its function is as follows. Glucuronoyl esterase which may play a significant role in biomass degradation, as it is considered to disconnect hemicellulose from lignin through the hydrolysis of the ester bond between 4-O-methyl-D-glucuronic acid residues of glucuronoxylans and aromatic alcohols of lignin. This Phanerochaete carnosa (strain HHB-10118-sp) (White-rot fungus) protein is 4-O-methyl-glucuronoyl methylesterase.